Reading from the N-terminus, the 194-residue chain is Orotate phosphoribosyltransferase (194 aa).

5-phospho-alpha-D-ribose 1-diphosphate contacts are provided by residues Arg102, Lys103, Lys106, His108, and 129-137 (EDVVTTGGS). Positions 133 and 161 each coordinate orotate.

The protein belongs to the purine/pyrimidine phosphoribosyltransferase family. PyrE subfamily. Homodimer. Requires Mg(2+) as cofactor.

The enzyme catalyses orotidine 5'-phosphate + diphosphate = orotate + 5-phospho-alpha-D-ribose 1-diphosphate. Its pathway is pyrimidine metabolism; UMP biosynthesis via de novo pathway; UMP from orotate: step 1/2. Its function is as follows. Catalyzes the transfer of a ribosyl phosphate group from 5-phosphoribose 1-diphosphate to orotate, leading to the formation of orotidine monophosphate (OMP). The protein is Orotate phosphoribosyltransferase of Prochlorococcus marinus (strain MIT 9211).